Here is a 181-residue protein sequence, read N- to C-terminus: Peptide methionine sulfoxide reductase MsrA (181 aa).

Cysteine 14 is a catalytic residue.

This sequence belongs to the MsrA Met sulfoxide reductase family.

The catalysed reaction is L-methionyl-[protein] + [thioredoxin]-disulfide + H2O = L-methionyl-(S)-S-oxide-[protein] + [thioredoxin]-dithiol. The enzyme catalyses [thioredoxin]-disulfide + L-methionine + H2O = L-methionine (S)-S-oxide + [thioredoxin]-dithiol. Its function is as follows. Has an important function as a repair enzyme for proteins that have been inactivated by oxidation. Catalyzes the reversible oxidation-reduction of methionine sulfoxide in proteins to methionine. In Bacillus licheniformis (strain ATCC 14580 / DSM 13 / JCM 2505 / CCUG 7422 / NBRC 12200 / NCIMB 9375 / NCTC 10341 / NRRL NRS-1264 / Gibson 46), this protein is Peptide methionine sulfoxide reductase MsrA.